The following is a 541-amino-acid chain: Reticulophagy regulator 2 (541 aa).

3 consecutive transmembrane segments (helical) span residues 75–91 (LHSL…FWLL), 99–115 (FFLL…LDLW), and 199–219 (VPGI…PLVV). Residues 249 to 282 (LHHKHDKRKRQGKNAPPAGDEPLAETESESEAEL) form a disordered region. Residues 250–260 (HHKHDKRKRQG) are compositionally biased toward basic residues. The segment covering 270 to 280 (PLAETESESEA) has biased composition (acidic residues). At Thr274 the chain carries Phosphothreonine. Residues Ser276, Ser278, Ser286, and Ser306 each carry the phosphoserine modification. A Phosphothreonine modification is found at Thr329. 3 disordered regions span residues 331 to 389 (VSED…ADKE), 403 to 440 (THFN…APSS), and 459 to 481 (PSVL…EEEA). 3 positions are modified to phosphoserine: Ser332, Ser339, and Ser342. Over residues 459–475 (PSVLPSLPQDSPQALTA) the composition is skewed to low complexity. An LIR motif motif is present at residues 485–490 (EDFELL). A disordered region spans residues 496–541 (EQLNAELGLGPEMPPKPPDVLPPPPLGPDSHSLVQSDQEAHAVVEP). Residues 507–522 (EMPPKPPDVLPPPPLG) show a composition bias toward pro residues.

This sequence belongs to the RETREG family. Interacts with ATG8 family modifier proteins MAP1LC3A, MAP1LC3B, GABARAP, GABARAPL1 and GABARAPL2. Interacts with CANX.

It is found in the endoplasmic reticulum membrane. In terms of biological role, endoplasmic reticulum (ER)-anchored autophagy regulator which exists in an inactive state under basal conditions but is activated following cellular stress. When activated, induces ER fragmentation and mediates ER delivery into lysosomes through sequestration into autophagosomes via interaction with ATG8 family proteins. Required for collagen quality control in a LIR motif-independent manner. This chain is Reticulophagy regulator 2 (Retreg2), found in Rattus norvegicus (Rat).